We begin with the raw amino-acid sequence, 426 residues long: Gamma-glutamyl phosphate reductase (426 aa).

Belongs to the gamma-glutamyl phosphate reductase family.

Its subcellular location is the cytoplasm. The enzyme catalyses L-glutamate 5-semialdehyde + phosphate + NADP(+) = L-glutamyl 5-phosphate + NADPH + H(+). The protein operates within amino-acid biosynthesis; L-proline biosynthesis; L-glutamate 5-semialdehyde from L-glutamate: step 2/2. Its function is as follows. Catalyzes the NADPH-dependent reduction of L-glutamate 5-phosphate into L-glutamate 5-semialdehyde and phosphate. The product spontaneously undergoes cyclization to form 1-pyrroline-5-carboxylate. The protein is Gamma-glutamyl phosphate reductase of Cupriavidus metallidurans (strain ATCC 43123 / DSM 2839 / NBRC 102507 / CH34) (Ralstonia metallidurans).